The primary structure comprises 757 residues: Protein ALTERED SEED GERMINATION 2 (757 aa).

6 WD repeats span residues Phe-6–Glu-43, Gly-48–Ser-87, Gly-91–Glu-132, Cys-145–Pro-185, Lys-213–Ser-253, and Arg-277–Gly-316. Positions Arg-245 to Arg-257 match the Nuclear localization signal motif. A TPR repeat occupies Phe-442 to Asp-475. The segment at Ala-519–Tyr-601 is disordered. Over residues Ser-523 to Arg-532 the composition is skewed to basic and acidic residues. Residues Glu-533 to Leu-543 show a composition bias toward acidic residues. Over residues Thr-582–Tyr-601 the composition is skewed to polar residues. 2 WD repeats span residues Asn-618–Val-658 and Gly-661–Val-700. Cys-754 carries S-12-hydroxyfarnesyl cysteine; by FTB/ERA1 lipidation.

In terms of assembly, interacts with DDB1; the subcellular localization of this complex depends on farnesylation status. Binds to HDA9 in the cytosol when farnesylated. In terms of processing, farnesylated at Cys-754 by FTB/ERA1; this modification triggers an exclusion from the nucleus.

The protein resides in the nucleus. It is found in the cytoplasm. It localises to the cytosol. It participates in protein modification; protein ubiquitination. In terms of biological role, may function as a substrate adapter for CUL4-DDB1 E3 ubiquitin-protein ligase complex. Negative regulator of fatty acid biosynthetic process and accumulation. Acts as an abscisic acid (ABA) negative regulator. Involved in responses to salt (NaCl) and osmotic (e.g. in response to mannitol and PEG) stresses. The polypeptide is Protein ALTERED SEED GERMINATION 2 (Arabidopsis thaliana (Mouse-ear cress)).